The sequence spans 475 residues: UDP-N-acetylmuramate--L-alanine ligase (475 aa).

112–118 (GTHGKTT) contacts ATP.

This sequence belongs to the MurCDEF family.

It is found in the cytoplasm. The enzyme catalyses UDP-N-acetyl-alpha-D-muramate + L-alanine + ATP = UDP-N-acetyl-alpha-D-muramoyl-L-alanine + ADP + phosphate + H(+). It participates in cell wall biogenesis; peptidoglycan biosynthesis. Its function is as follows. Cell wall formation. In Paracidovorax citrulli (strain AAC00-1) (Acidovorax citrulli), this protein is UDP-N-acetylmuramate--L-alanine ligase.